Here is a 222-residue protein sequence, read N- to C-terminus: Inositol diphosphatase DSP1 (222 aa).

Residues Met1 to Asp14 show a composition bias toward polar residues. Residues Met1–Pro41 are disordered. Positions Asn68–Cys222 constitute a Tyrosine-protein phosphatase domain. Residues Phe124–Ile136 form a WPD loop important for active site topology region. 1D-myo-inositol hexakisphosphate is bound by residues Asn135, Ile136, and Arg140. Cys160 acts as the Phosphocysteine intermediate in catalysis.

The protein belongs to the protein-tyrosine phosphatase family. Atypical dual-specificity phosphatase Siw14-like subfamily.

It localises to the nucleus. It is found in the cytoplasm. It carries out the reaction 5-diphospho-1D-myo-inositol 1,2,3,4,6-pentakisphosphate + H2O = 1D-myo-inositol hexakisphosphate + phosphate + H(+). The catalysed reaction is 1,5-bis(diphospho)-1D-myo-inositol 2,3,4,6-tetrakisphosphate + H2O = 1-diphospho-1D-myo-inositol 2,3,4,5,6-pentakisphosphate + phosphate + 2 H(+). It catalyses the reaction 3,5-bis(diphospho)-1D-myo-inositol 1,2,4,6-tetrakisphosphate + H2O = 3-diphospho-1D-myo-inositol 1,2,4,5,6-pentakisphosphate + phosphate + 2 H(+). The enzyme catalyses 6-diphospho-1D-myo-inositol pentakisphosphate + H2O = 1D-myo-inositol hexakisphosphate + phosphate + H(+). Cleaves the beta-phosphate at the 5-position of soluble inositol pyrophosphates. Has highest activity on 5-diphosphoinositol 1,2,3,4,6-pentakisphosphate (5-InsP(7)). Possesses phosphotyrosine phosphatase activity in vitro. May contribute to regulation of drought stress responses. This Oryza sativa subsp. japonica (Rice) protein is Inositol diphosphatase DSP1.